The chain runs to 664 residues: ATP synthase subunit alpha 2 (664 aa).

180–187 (GDRATGKT) contributes to the ATP binding site. Residues 525–664 (MPAEDAAGDI…DAEAEARHKR (140 aa)) are disordered. Basic and acidic residues predominate over residues 543-588 (ARGDADRDADHGANREVSREVSPEASREVSREVSCEVSHEADRDAA). Residues 589–599 (ADAARVAGRAP) are compositionally biased toward low complexity. The segment covering 621-639 (ADGDRASASRPRPDARGDA) has biased composition (basic and acidic residues).

This sequence belongs to the ATPase alpha/beta chains family. F-type ATPases have 2 components, CF(1) - the catalytic core - and CF(0) - the membrane proton channel. CF(1) has five subunits: alpha(3), beta(3), gamma(1), delta(1), epsilon(1). CF(0) has three main subunits: a(1), b(2) and c(9-12). The alpha and beta chains form an alternating ring which encloses part of the gamma chain. CF(1) is attached to CF(0) by a central stalk formed by the gamma and epsilon chains, while a peripheral stalk is formed by the delta and b chains.

Its subcellular location is the cell inner membrane. It carries out the reaction ATP + H2O + 4 H(+)(in) = ADP + phosphate + 5 H(+)(out). Produces ATP from ADP in the presence of a proton gradient across the membrane. The alpha chain is a regulatory subunit. This chain is ATP synthase subunit alpha 2, found in Burkholderia pseudomallei (strain 1710b).